Reading from the N-terminus, the 269-residue chain is Tryptophan synthase alpha chain (269 aa).

Active-site proton acceptor residues include Glu49 and Asp60.

It belongs to the TrpA family. Tetramer of two alpha and two beta chains.

It catalyses the reaction (1S,2R)-1-C-(indol-3-yl)glycerol 3-phosphate + L-serine = D-glyceraldehyde 3-phosphate + L-tryptophan + H2O. The protein operates within amino-acid biosynthesis; L-tryptophan biosynthesis; L-tryptophan from chorismate: step 5/5. The alpha subunit is responsible for the aldol cleavage of indoleglycerol phosphate to indole and glyceraldehyde 3-phosphate. This is Tryptophan synthase alpha chain from Pseudomonas putida (strain W619).